A 422-amino-acid polypeptide reads, in one-letter code: Hexuronate transporter (422 aa).

The next 11 membrane-spanning stretches (helical) occupy residues 9–29 (VILFLFLAGVINYLDRSALSI), 45–65 (MGLIFSSFSIGYAIFNFLGGV), 82–102 (VWSLFSGAVALAFGFVSLLII), 141–161 (TPLGGAISGPIVGMIAVAFSW), 163–183 (VSFVLIMIIGLIWAVLWFKFV), 219–239 (LFTAFAFFAYNYILFFFLTWF), 256–276 (VITVIPWILGFIGLAAGGFVS), 294–314 (VVLVTCLFSSAVLIGFAGLVA), 321–341 (TLVALSVFFLYLTGAIYWAVI), 356–376 (FMHFLANTAGIIGPALTGFIV), and 381–401 (TFSGAFLLAGGLAVFASLAVI).

This sequence belongs to the major facilitator superfamily. Phthalate permease family.

Its subcellular location is the cell membrane. The catalysed reaction is aldehydo-D-glucuronate(in) + H(+)(in) = aldehydo-D-glucuronate(out) + H(+)(out). The enzyme catalyses aldehydo-D-galacturonate(out) + H(+)(out) = aldehydo-D-galacturonate(in) + H(+)(in). Functionally, transport of aldohexuronates such as D-glucuronate and D-galacturonate. This chain is Hexuronate transporter, found in Bacillus subtilis (strain 168).